A 274-amino-acid polypeptide reads, in one-letter code: Diaminopimelate epimerase (274 aa).

Residues Asn13, Gln47, and Asn65 each contribute to the substrate site. Cys74 (proton donor) is an active-site residue. Residues 75 to 76, Asn149, Asn182, and 200 to 201 each bind substrate; these read GN and ER. Cys209 acts as the Proton acceptor in catalysis. 210–211 is a substrate binding site; it reads GT.

It belongs to the diaminopimelate epimerase family. Homodimer.

It is found in the cytoplasm. The catalysed reaction is (2S,6S)-2,6-diaminopimelate = meso-2,6-diaminopimelate. Its pathway is amino-acid biosynthesis; L-lysine biosynthesis via DAP pathway; DL-2,6-diaminopimelate from LL-2,6-diaminopimelate: step 1/1. In terms of biological role, catalyzes the stereoinversion of LL-2,6-diaminopimelate (L,L-DAP) to meso-diaminopimelate (meso-DAP), a precursor of L-lysine and an essential component of the bacterial peptidoglycan. The sequence is that of Diaminopimelate epimerase from Rhizorhabdus wittichii (strain DSM 6014 / CCUG 31198 / JCM 15750 / NBRC 105917 / EY 4224 / RW1) (Sphingomonas wittichii).